Reading from the N-terminus, the 243-residue chain is NifU-like scaffold protein (243 aa).

Belongs to the NifU family. As to quaternary structure, homodimer.

The protein resides in the plastid. It localises to the apicoplast. The protein operates within cofactor biosynthesis; iron-sulfur cluster biosynthesis. Functionally, binds and transfers [4Fe-4S] iron-sulfur clusters to target proteins. The chain is NifU-like scaffold protein from Plasmodium berghei (strain Anka).